A 142-amino-acid chain; its full sequence is Large ribosomal subunit protein uL13 (142 aa).

Belongs to the universal ribosomal protein uL13 family. As to quaternary structure, part of the 50S ribosomal subunit.

In terms of biological role, this protein is one of the early assembly proteins of the 50S ribosomal subunit, although it is not seen to bind rRNA by itself. It is important during the early stages of 50S assembly. The protein is Large ribosomal subunit protein uL13 of Lachnospira eligens (strain ATCC 27750 / DSM 3376 / VPI C15-48 / C15-B4) (Eubacterium eligens).